The chain runs to 226 residues: Large ribosomal subunit protein uL1 (226 aa).

It belongs to the universal ribosomal protein uL1 family. In terms of assembly, part of the 50S ribosomal subunit.

Its function is as follows. Binds directly to 23S rRNA. The L1 stalk is quite mobile in the ribosome, and is involved in E site tRNA release. Functionally, protein L1 is also a translational repressor protein, it controls the translation of the L11 operon by binding to its mRNA. The protein is Large ribosomal subunit protein uL1 of Treponema pallidum (strain Nichols).